The chain runs to 612 residues: uncharacterized protein (612 aa).

The segment at 171 to 217 is disordered; sequence MLPPSLVQRNNATTSPTTDSASENNESVPSLTSSVSTSSSVYSSWNP. Positions 177–196 are enriched in polar residues; sequence VQRNNATTSPTTDSASENNE. A compositionally biased stretch (low complexity) spans 197–214; that stretch reads SVPSLTSSVSTSSSVYSS.

The protein to yeast YNL018c.

This is an uncharacterized protein from Saccharomyces cerevisiae (strain ATCC 204508 / S288c) (Baker's yeast).